The chain runs to 88 residues: RQC P-site tRNA stabilizing factor (88 aa).

Positions 1–60 constitute an S4 RNA-binding domain; sequence MRLDKYLKVSRIIKRRTVAKEVADKGRIKVNGILAKSSTDLKVNDQVEIRFGNKLLLVKV.

It belongs to the RqcP family. In terms of assembly, associates with stalled 50S ribosomal subunits. Binds to RqcH, 23S rRNA and the P-site tRNA. Does not require RqcH for association with 50S subunits.

Key component of the ribosome quality control system (RQC), a ribosome-associated complex that mediates the extraction of incompletely synthesized nascent chains from stalled ribosomes and their subsequent degradation. RqcH recruits Ala-charged tRNA, and with RqcP directs the elongation of stalled nascent chains on 50S ribosomal subunits, leading to non-templated C-terminal alanine extensions (Ala tail). The Ala tail promotes nascent chain degradation. RqcP is associated with the translocation-like movement of the peptidyl-tRNA from the A-site into the P-site. This chain is RQC P-site tRNA stabilizing factor, found in Streptococcus pneumoniae (strain ATCC BAA-255 / R6).